A 206-amino-acid polypeptide reads, in one-letter code: Outer-membrane lipoprotein LolB (206 aa).

An N-terminal signal peptide occupies residues Met-1–Ala-18. Cys-19 is lipidated: N-palmitoyl cysteine. Cys-19 is lipidated: S-diacylglycerol cysteine.

The protein belongs to the LolB family. Monomer.

The protein localises to the cell outer membrane. Plays a critical role in the incorporation of lipoproteins in the outer membrane after they are released by the LolA protein. This is Outer-membrane lipoprotein LolB from Haemophilus influenzae (strain PittEE).